Here is a 437-residue protein sequence, read N- to C-terminus: Succinyl-CoA:cyclohexane-1-carboxylate CoA transferase (437 aa).

Position 221-225 (221-225 (GWGGI)) interacts with CoA. Glu-244 serves as the catalytic 5-glutamyl coenzyme A thioester intermediate. CoA is bound by residues Leu-319, Gly-342, and Lys-367.

It belongs to the acetyl-CoA hydrolase/transferase family. Homodimer.

It carries out the reaction cyclohexane-1-carboxylate + succinyl-CoA = cyclohexane-1-carbonyl-CoA + succinate. The catalysed reaction is cyclohexane-1-carboxylate + butanoyl-CoA = cyclohexane-1-carbonyl-CoA + butanoate. Its function is as follows. Acyl-CoA transferase involved in the anaerobic degradation of cyclohexane carboxylic acid (CHC). Catalyzes the activation of CHC to cyclohexane-1-carbonyl-CoA (CHCoA). Benzoic acid and cyclohex-1-ene-1-carboxylic acid can also be used as substrates, but with lower specific activity. Shows highest activity with succinyl-CoA and butanoyl-coA as a CoA donor, and lower activity with crotonyl-CoA, acetyl-CoA, glutaryl-CoA, CH1eneCoA, propionyl-CoA and acetoacetyl-CoA. In vitro, the enzyme can use butanoyl-coA as a CoA donor with greater efficiency than succinyl-CoA. However, succinyl-CoA is the most abundant CoA ester in exponentially grown cells, whereas butanoyl-coA is hardly detectable, indicating that succinyl-CoA is the natural CoA donor for CHC activation. In Geobacter metallireducens (strain ATCC 53774 / DSM 7210 / GS-15), this protein is Succinyl-CoA:cyclohexane-1-carboxylate CoA transferase.